The sequence spans 149 residues: Calmodulin-like protein 3 (149 aa).

4 consecutive EF-hand domains span residues 8–43 (EQVT…LGQN), 44–79 (PTEA…KMKD), 81–116 (DNEE…LGEK), and 117–149 (LSDE…LVSK). Asp-21, Asp-23, Asp-25, Cys-27, Glu-32, Asp-57, Asp-59, Asn-61, Thr-63, Glu-68, Asp-94, Asp-96, Asn-98, Glu-105, Asp-130, Asp-132, Asp-134, Gln-136, and Glu-141 together coordinate Ca(2+).

It belongs to the calmodulin family. In terms of assembly, interacts with MYO10, the interaction is calcium-dependent and essential for MYO10 function in filopodial extension. In terms of tissue distribution, expressed in normal mammary, prostate, cervical, and epidermal tissues. It is greatly reduced or undetectable in transformed cells.

May function as a specific light chain of unconventional myosin-10 (MYO10), also enhances MYO10 translation, possibly by acting as a chaperone for the emerging MYO10 heavy chain protein. May compete with calmodulin by binding, with different affinities, to cellular substrates. In Homo sapiens (Human), this protein is Calmodulin-like protein 3 (CALML3).